The primary structure comprises 203 residues: RNA annealing protein YRA2 (203 aa).

Methionine 1 is modified (N-acetylmethionine). 2 disordered regions span residues methionine 1–proline 60 and glutamine 137–glycine 203. A compositionally biased stretch (polar residues) spans asparagine 11–histidine 20. Residues serine 47–proline 60 show a composition bias toward basic and acidic residues. Residues lysine 64–proline 138 enclose the RRM domain. Residues glutamine 139–glutamine 153 show a composition bias toward basic residues. A compositionally biased stretch (basic and acidic residues) spans threonine 154 to glycine 164. Positions serine 165–glycine 180 are enriched in basic residues.

It belongs to the YRA1 family. As to quaternary structure, associates with mRNPs. Interacts with YRA1.

Its subcellular location is the nucleus. Involved in export of poly(A) mRNAs from the nucleus. Recruited to the coding sequences as well as poly-A sites of active genes. The sequence is that of RNA annealing protein YRA2 (YRA2) from Saccharomyces cerevisiae (strain YJM789) (Baker's yeast).